A 269-amino-acid polypeptide reads, in one-letter code: Hydroxyethylthiazole kinase (269 aa).

Position 42 (Met42) interacts with substrate. 2 residues coordinate ATP: Arg118 and Ser164. Substrate is bound at residue Gly191.

This sequence belongs to the Thz kinase family. It depends on Mg(2+) as a cofactor.

The enzyme catalyses 5-(2-hydroxyethyl)-4-methylthiazole + ATP = 4-methyl-5-(2-phosphooxyethyl)-thiazole + ADP + H(+). The protein operates within cofactor biosynthesis; thiamine diphosphate biosynthesis; 4-methyl-5-(2-phosphoethyl)-thiazole from 5-(2-hydroxyethyl)-4-methylthiazole: step 1/1. Catalyzes the phosphorylation of the hydroxyl group of 4-methyl-5-beta-hydroxyethylthiazole (THZ). The polypeptide is Hydroxyethylthiazole kinase (Listeria welshimeri serovar 6b (strain ATCC 35897 / DSM 20650 / CCUG 15529 / CIP 8149 / NCTC 11857 / SLCC 5334 / V8)).